The sequence spans 484 residues: Poly(A) RNA polymerase GLD2 (484 aa).

Phosphoserine is present on residues serine 62 and serine 69. Positions 76–92 (KRISDEKAFPLDGKRQR) match the Nuclear localization signal motif. Serine 95 bears the Phosphoserine mark. Mg(2+)-binding residues include aspartate 213 and aspartate 215. Positions 386–440 (SLGDLLLGFLKYYATEFDWNTQMISVREAKAIPRPDDMEWRNKYICVEEPFDGTN) constitute a PAP-associated domain.

It belongs to the DNA polymerase type-B-like family. GLD2 subfamily. Interacts with CPEB1, CPEB2, CPSF1 and PABPC1. Interacts with QKI isoform QKI7; promoting recruitment to miRNA miR-122 and miR-122 stabilization. Requires Mg(2+) as cofactor. The cofactor is Mn(2+). In terms of tissue distribution, ubiquitous. In brain, it is highly expressed in the cerebral cortex, cerebellum, hippocampus and olfactory bulb.

It is found in the cytoplasm. The protein localises to the nucleus. The enzyme catalyses RNA(n) + ATP = RNA(n)-3'-adenine ribonucleotide + diphosphate. Functionally, cytoplasmic poly(A) RNA polymerase that adds successive AMP monomers to the 3'-end of specific RNAs, forming a poly(A) tail. In contrast to the canonical nuclear poly(A) RNA polymerase, it only adds poly(A) to selected cytoplasmic mRNAs. Does not play a role in replication-dependent histone mRNA degradation. Adds a single nucleotide to the 3' end of specific miRNAs, monoadenylation stabilizes and prolongs the activity of some but not all miRNAs. The sequence is that of Poly(A) RNA polymerase GLD2 (Tent2) from Mus musculus (Mouse).